A 187-amino-acid polypeptide reads, in one-letter code: Probable chorismate pyruvate-lyase (187 aa).

Arg-81, Leu-119, and Glu-178 together coordinate substrate.

The protein belongs to the UbiC family.

The protein localises to the cytoplasm. The enzyme catalyses chorismate = 4-hydroxybenzoate + pyruvate. Its pathway is cofactor biosynthesis; ubiquinone biosynthesis. Removes the pyruvyl group from chorismate, with concomitant aromatization of the ring, to provide 4-hydroxybenzoate (4HB) for the ubiquinone pathway. This Thiobacillus denitrificans (strain ATCC 25259 / T1) protein is Probable chorismate pyruvate-lyase.